Here is a 406-residue protein sequence, read N- to C-terminus: DNA-binding transcriptional repressor Mlc (406 aa).

A DNA-binding region (H-T-H motif) is located at residues 33–42; sequence RIDLSRLAQL. Zn(2+) contacts are provided by histidine 247, cysteine 257, cysteine 259, and cysteine 264.

It belongs to the ROK (NagC/XylR) family. Homodimer. Homotetramer. There is probably an equilibrium between the dimeric and the tetrameric form. Interacts with dephosphorylated PtsG. Mlc and PtsG EIIB domain form a complex with the 1:1 stoichiometry. Interacts with MtfA.

It localises to the cytoplasm. Its activity is regulated as follows. Activity is modulated by glucose. In the presence of glucose, is inhibited by interaction with the dephosphorylated form of PtsG, which sequesters Mlc in the inner membrane and prevents Mlc binding to its target promoters. The restriction of conformational freedom resulting from the anchoring of four ends of Mlc to the membrane could be the primary cause of its loss of DNA-binding activity in vivo. Activity is also inhibited by interaction with the Mlc titration factor A (mtfA). The inactivation mechanisms of Mlc by dephosphorylated PtsG and MtfA differ significantly. Functionally, global regulator of carbohydrate metabolism. Represses the expression of several genes involved in sugar transport and utilization, in particular phosphoenolpyruvate-carbohydrate phosphotransferase system (PTS) genes. Represses expression of ptsG (EIICB(Glc)), which encodes the PTS system glucose-specific EIICB component. Also represses the expression of the manXYZ operon, encoding the mannose-specific PTS system, expression of malT, encoding the transcriptional activator of the maltose regulon, and expression of the pts operon, composed of the genes ptsH, ptsI and crr. Represses its own expression. Acts by binding to the regulatory region of the target genes. The polypeptide is DNA-binding transcriptional repressor Mlc (Escherichia coli (strain K12)).